A 91-amino-acid chain; its full sequence is Elongation factor 1-beta (91 aa).

Belongs to the EF-1-beta/EF-1-delta family.

In terms of biological role, promotes the exchange of GDP for GTP in EF-1-alpha/GDP, thus allowing the regeneration of EF-1-alpha/GTP that could then be used to form the ternary complex EF-1-alpha/GTP/AAtRNA. This chain is Elongation factor 1-beta, found in Caldivirga maquilingensis (strain ATCC 700844 / DSM 13496 / JCM 10307 / IC-167).